Reading from the N-terminus, the 386-residue chain is S-adenosylmethionine synthase (386 aa).

His-16 lines the ATP pocket. A Mg(2+)-binding site is contributed by Asp-18. Glu-44 is a K(+) binding site. Positions 57 and 100 each coordinate L-methionine. The interval 100 to 110 is flexible loop; the sequence is QSSDIAQGVDR. Residues 165–167, Asp-240, 246–247, Ala-263, and Lys-267 contribute to the ATP site; these read DAK and RK. Residue Asp-240 participates in L-methionine binding. Position 271 (Lys-271) interacts with L-methionine.

Belongs to the AdoMet synthase family. In terms of assembly, homotetramer; dimer of dimers. Mg(2+) serves as cofactor. K(+) is required as a cofactor.

Its subcellular location is the cytoplasm. It carries out the reaction L-methionine + ATP + H2O = S-adenosyl-L-methionine + phosphate + diphosphate. Its pathway is amino-acid biosynthesis; S-adenosyl-L-methionine biosynthesis; S-adenosyl-L-methionine from L-methionine: step 1/1. Functionally, catalyzes the formation of S-adenosylmethionine (AdoMet) from methionine and ATP. The overall synthetic reaction is composed of two sequential steps, AdoMet formation and the subsequent tripolyphosphate hydrolysis which occurs prior to release of AdoMet from the enzyme. The chain is S-adenosylmethionine synthase from Francisella philomiragia subsp. philomiragia (strain ATCC 25017 / CCUG 19701 / FSC 153 / O#319-036).